A 225-amino-acid polypeptide reads, in one-letter code: C-reactive protein (225 aa).

Positions 1 to 19 are cleaved as a signal peptide; sequence MEKLLWCSLVMIGFSQAFA. Gln-20 is modified (pyrrolidone carboxylic acid). One can recognise a Pentraxin (PTX) domain in the interval 24–225; sequence SKTAFVFPKE…DVFIKPQLWP (202 aa). A disulfide bridge connects residues Cys-55 and Cys-116. Residues Asn-80, Glu-157, Gln-158, Asp-159, and Gln-169 each coordinate Ca(2+).

Belongs to the pentraxin family. Homopentamer. Pentraxin (or pentaxin) have a discoid arrangement of 5 non-covalently bound subunits. Interacts with FCN1; may regulate monocyte activation by FCN1. Ca(2+) is required as a cofactor. In terms of tissue distribution, found in plasma.

Its subcellular location is the secreted. Functionally, displays several functions associated with host defense: it promotes agglutination, bacterial capsular swelling, phagocytosis and complement fixation through its calcium-dependent binding to phosphorylcholine. Can interact with DNA and histones and may scavenge nuclear material released from damaged circulating cells. This Mesocricetus auratus (Golden hamster) protein is C-reactive protein (CRP).